Here is an 85-residue protein sequence, read N- to C-terminus: Antibacterial factor-related peptide 2 (85 aa).

The first 17 residues, 1-17 (MFVRSLFLALLLATIVA), serve as a signal peptide directing secretion. Positions 82–85 (IKRG) are excised as a propeptide.

In terms of tissue distribution, expressed in the pharynx (at protein level). Detected in pharyngeal neurons and secretory cells.

The protein resides in the secreted. Its function is as follows. Exhibits antimicrobial activity against the Gram-positive bacteria B.subtilis IFO 3134, K.varians MAFF 118076 and S.aureus ATCC 6538P, the Gram-negative bacteria A.tumefaciens MAFF 1001, B.bacteriovorus MAFF 106101 and K.pneumoniae MAFF 519002, and the yeasts C.krusei MAFF 114085, K.thermotolerans MAFF 113848 and T.delbrueckii MAFF 113811. This chain is Antibacterial factor-related peptide 2, found in Caenorhabditis elegans.